The sequence spans 254 residues: CRISPR-associated endonuclease Cas1 (254 aa).

Mn(2+) contacts are provided by E78, H146, and E161.

It belongs to the CRISPR-associated endonuclease Cas1 family. In terms of assembly, homodimer, forms a heterotetramer with a Cas2 homodimer. Mg(2+) serves as cofactor. Mn(2+) is required as a cofactor.

Functionally, CRISPR (clustered regularly interspaced short palindromic repeat), is an adaptive immune system that provides protection against mobile genetic elements (viruses, transposable elements and conjugative plasmids). CRISPR clusters contain spacers, sequences complementary to antecedent mobile elements, and target invading nucleic acids. CRISPR clusters are transcribed and processed into CRISPR RNA (crRNA). Acts as a dsDNA endonuclease. Involved in the integration of spacer DNA into the CRISPR cassette. This is CRISPR-associated endonuclease Cas1 from Leptospira interrogans serogroup Icterohaemorrhagiae serovar Lai (strain 56601).